The chain runs to 500 residues: MSHHSSWRGHHCAPGDINCTAGFKESLGSRNYKLLHVPVHGPTHSHHHDPPHPFPTVDVPDHAHYIIGSVILIVGITGVIGNALVVYVFCRSRTLRTAGNMFIVNLAVADFLMSVTQSPVFFAASLHRRWVFGERPCELYAFCGALFGICSMMTLTAIAADRCLAITQPLALVSRVSRRKAGAVLVVVWLYSLGWSLPPFFGWSAYVPEGLQTSCSWDYMTFTPSVRAYTILLFVFVFFIPLGIIGSCYFAIFQTIRAAGKEIRELDCGETHKVYERMQNEWKMAKVALVVIVLFIISWSPYSVVALTATAGYSHFLTPYMNSVPAVIAKASAIHNPIIYAITHPKYRVAIARYIPVLRPILRVKEKDLRSSFSSGSVSSRRPTLTSQCSLGVSMGNAARANGRWGKTRLSSASDSDSCWTESEADGSSVSSLTFGRRVSTEISTDTVILSSGSSVSNASGQKSERAHKVISVPVPSITFETDAADGESLSDGKALLGGN.

Topologically, residues 1–65 (MSHHSSWRGH…TVDVPDHAHY (65 aa)) are extracellular. The N-linked (GlcNAc...) asparagine glycan is linked to Asn18. Residues 66-86 (IIGSVILIVGITGVIGNALVV) traverse the membrane as a helical segment. The Cytoplasmic portion of the chain corresponds to 87 to 101 (YVFCRSRTLRTAGNM). Residues 102–122 (FIVNLAVADFLMSVTQSPVFF) form a helical membrane-spanning segment. Residues 123-138 (AASLHRRWVFGERPCE) are Extracellular-facing. An intrachain disulfide couples Cys137 to Cys215. The chain crosses the membrane as a helical span at residues 139–159 (LYAFCGALFGICSMMTLTAIA). At 160–182 (ADRCLAITQPLALVSRVSRRKAG) the chain is on the cytoplasmic side. The helical transmembrane segment at 183–203 (AVLVVVWLYSLGWSLPPFFGW) threads the bilayer. Residues 204–232 (SAYVPEGLQTSCSWDYMTFTPSVRAYTIL) lie on the Extracellular side of the membrane. Residues 233-253 (LFVFVFFIPLGIIGSCYFAIF) form a helical membrane-spanning segment. Topologically, residues 254-286 (QTIRAAGKEIRELDCGETHKVYERMQNEWKMAK) are cytoplasmic. A helical membrane pass occupies residues 287-307 (VALVVIVLFIISWSPYSVVAL). The Extracellular portion of the chain corresponds to 308–322 (TATAGYSHFLTPYMN). Residues 323–343 (SVPAVIAKASAIHNPIIYAIT) form a helical membrane-spanning segment. At Lys330 the chain carries N6-(retinylidene)lysine. At 344-500 (HPKYRVAIAR…SDGKALLGGN (157 aa)) the chain is on the cytoplasmic side. A disordered region spans residues 404-428 (RWGKTRLSSASDSDSCWTESEADGS). Residues 409–428 (RLSSASDSDSCWTESEADGS) show a composition bias toward polar residues.

The protein belongs to the G-protein coupled receptor 1 family. Opsin subfamily. In terms of tissue distribution, expressed in a subset of retinal horizontal cells.

Its subcellular location is the cell membrane. Its function is as follows. Photoreceptor implicated in non-image-forming responses to light. The sequence is that of Melanopsin-like (opn4l) from Danio rerio (Zebrafish).